Consider the following 246-residue polypeptide: Acetoacetate decarboxylase (246 aa).

The active-site Schiff-base intermediate with acetoacetate is K115.

Belongs to the ADC family.

The catalysed reaction is acetoacetate + H(+) = acetone + CO2. Catalyzes the conversion of acetoacetate to acetone and carbon dioxide. The chain is Acetoacetate decarboxylase from Clostridium beijerinckii (strain ATCC 51743 / NCIMB 8052) (Clostridium acetobutylicum).